A 200-amino-acid chain; its full sequence is Dual-action ribosomal maturation protein DarP (200 aa).

2 disordered regions span residues 1–25 and 177–200; these read MTRKTRIQPIEHAAEVDDNGYDRPS and TASGTPGGDDEAADEAGDDHDDEA. The segment covering 12 to 25 has biased composition (basic and acidic residues); that stretch reads HAAEVDDNGYDRPS. The segment covering 184–200 has biased composition (acidic residues); that stretch reads GDDEAADEAGDDHDDEA.

Belongs to the DarP family.

The protein resides in the cytoplasm. Functionally, member of a network of 50S ribosomal subunit biogenesis factors which assembles along the 30S-50S interface, preventing incorrect 23S rRNA structures from forming. Promotes peptidyl transferase center (PTC) maturation. In Burkholderia ambifaria (strain MC40-6), this protein is Dual-action ribosomal maturation protein DarP.